A 215-amino-acid polypeptide reads, in one-letter code: Ribosomal RNA small subunit methyltransferase G (215 aa).

S-adenosyl-L-methionine contacts are provided by residues Gly77, Phe82, 130-131 (IE), and Arg146.

It belongs to the methyltransferase superfamily. RNA methyltransferase RsmG family.

Its subcellular location is the cytoplasm. The enzyme catalyses guanosine(527) in 16S rRNA + S-adenosyl-L-methionine = N(7)-methylguanosine(527) in 16S rRNA + S-adenosyl-L-homocysteine. Its function is as follows. Specifically methylates the N7 position of guanine in position 527 of 16S rRNA. The chain is Ribosomal RNA small subunit methyltransferase G from Bartonella henselae (strain ATCC 49882 / DSM 28221 / CCUG 30454 / Houston 1) (Rochalimaea henselae).